The chain runs to 784 residues: Probable phosphoketolase (784 aa).

This sequence belongs to the XFP family. Thiamine diphosphate is required as a cofactor.

The polypeptide is Probable phosphoketolase (Rhodopseudomonas palustris (strain HaA2)).